The sequence spans 265 residues: Shikimate dehydrogenase (NADP(+)) (265 aa).

Shikimate-binding positions include 14 to 16 (SLS) and threonine 61. Lysine 65 acts as the Proton acceptor in catalysis. Positions 85 and 100 each coordinate shikimate. Residues 123-127 (GAGGA), 146-151 (NRTESK), and alanine 209 contribute to the NADP(+) site. Tyrosine 211 contacts shikimate. Glycine 232 is a binding site for NADP(+).

This sequence belongs to the shikimate dehydrogenase family. Homodimer.

It carries out the reaction shikimate + NADP(+) = 3-dehydroshikimate + NADPH + H(+). It functions in the pathway metabolic intermediate biosynthesis; chorismate biosynthesis; chorismate from D-erythrose 4-phosphate and phosphoenolpyruvate: step 4/7. Functionally, involved in the biosynthesis of the chorismate, which leads to the biosynthesis of aromatic amino acids. Catalyzes the reversible NADPH linked reduction of 3-dehydroshikimate (DHSA) to yield shikimate (SA). The chain is Shikimate dehydrogenase (NADP(+)) from Haloarcula marismortui (strain ATCC 43049 / DSM 3752 / JCM 8966 / VKM B-1809) (Halobacterium marismortui).